The chain runs to 150 residues: UPF0506 protein SJCHGC03144 (150 aa).

Residues 1 to 18 (MNTCIQLLILCLVTVINS) form the signal peptide. 4 N-linked (GlcNAc...) asparagine glycosylation sites follow: Asn-20, Asn-36, Asn-52, and Asn-110. 3 cysteine pairs are disulfide-bonded: Cys-116–Cys-130, Cys-123–Cys-134, and Cys-129–Cys-139.

It belongs to the UPF0506 family.

The protein resides in the secreted. The sequence is that of UPF0506 protein SJCHGC03144 from Schistosoma japonicum (Blood fluke).